The primary structure comprises 148 residues: Large ribosomal subunit protein uL15 (148 aa).

Residues 1-10 (MQLHNLEYKK) are compositionally biased toward basic and acidic residues. A disordered region spans residues 1–42 (MQLHNLEYKKGSRNHKEKRVGRGHGSGLGKTSGRGQDGQKAR). The segment covering 11–22 (GSRNHKEKRVGR) has biased composition (basic residues). Over residues 23-36 (GHGSGLGKTSGRGQ) the composition is skewed to gly residues.

This sequence belongs to the universal ribosomal protein uL15 family. In terms of assembly, part of the 50S ribosomal subunit.

Functionally, binds to the 23S rRNA. This is Large ribosomal subunit protein uL15 from Ureaplasma parvum serovar 3 (strain ATCC 27815 / 27 / NCTC 11736).